The primary structure comprises 188 residues: Ion-translocating oxidoreductase complex subunit B (188 aa).

The segment at 1-26 is hydrophobic; that stretch reads MNGVFLAIGALLPICLAGGALLGYAA. In terms of domain architecture, 4Fe-4S spans 32–90; that stretch reads QGDPVAEQVNALLPQTQCGQCGYPGCKPYAEAIAAGDKINKCPPGGEATIRALADLLDL. Positions 49, 52, 57, 73, 113, 116, 119, 123, 143, 146, 149, and 153 each coordinate [4Fe-4S] cluster. 2 4Fe-4S ferredoxin-type domains span residues 104–133 and 134–163; these read RVAY…GAAR and LMHT…MREI.

It belongs to the 4Fe4S bacterial-type ferredoxin family. RnfB subfamily. In terms of assembly, the complex is composed of six subunits: RnfA, RnfB, RnfC, RnfD, RnfE and RnfG. [4Fe-4S] cluster is required as a cofactor.

The protein resides in the cell inner membrane. Functionally, part of a membrane-bound complex that couples electron transfer with translocation of ions across the membrane. This Pseudomonas aeruginosa (strain LESB58) protein is Ion-translocating oxidoreductase complex subunit B.